Here is an 89-residue protein sequence, read N- to C-terminus: Acylphosphatase (89 aa).

Residues 4–89 enclose the Acylphosphatase-like domain; the sequence is SYIAHISGRV…WQEHHFFSIG (86 aa). Residues Arg19 and Asn37 contribute to the active site.

The protein belongs to the acylphosphatase family.

The catalysed reaction is an acyl phosphate + H2O = a carboxylate + phosphate + H(+). The chain is Acylphosphatase (acyP) from Colwellia psychrerythraea (strain 34H / ATCC BAA-681) (Vibrio psychroerythus).